The sequence spans 478 residues: Early growth response protein 4 (478 aa).

Positions 275–302 (TEGLPALLTPPGGEGGSGGEGGEFLAAP) are disordered. Residues 286–296 (GGEGGSGGEGG) are compositionally biased toward gly residues. 3 C2H2-type zinc fingers span residues 372–396 (FACP…LRIH), 402–424 (FQCR…VRTH), and 430–452 (FACD…SKVH).

Belongs to the EGR C2H2-type zinc-finger protein family.

The protein resides in the nucleus. Transcriptional regulator. Recognizes and binds to the DNA sequence 5'-GCGGGGGCG-3' (GSG). Activates the transcription of target genes whose products are required for mitogenesis and differentiation. In Mus musculus (Mouse), this protein is Early growth response protein 4 (Egr4).